Reading from the N-terminus, the 66-residue chain is UPF0434 protein Jann_0424 (66 aa).

Belongs to the UPF0434 family.

This Jannaschia sp. (strain CCS1) protein is UPF0434 protein Jann_0424.